Here is a 342-residue protein sequence, read N- to C-terminus: Phosphoribosylformylglycinamidine cyclo-ligase (342 aa).

Belongs to the AIR synthase family.

The protein localises to the cytoplasm. The catalysed reaction is 2-formamido-N(1)-(5-O-phospho-beta-D-ribosyl)acetamidine + ATP = 5-amino-1-(5-phospho-beta-D-ribosyl)imidazole + ADP + phosphate + H(+). Its pathway is purine metabolism; IMP biosynthesis via de novo pathway; 5-amino-1-(5-phospho-D-ribosyl)imidazole from N(2)-formyl-N(1)-(5-phospho-D-ribosyl)glycinamide: step 2/2. The polypeptide is Phosphoribosylformylglycinamidine cyclo-ligase (Staphylococcus saprophyticus subsp. saprophyticus (strain ATCC 15305 / DSM 20229 / NCIMB 8711 / NCTC 7292 / S-41)).